The following is a 442-amino-acid chain: tRNA-2-methylthio-N(6)-dimethylallyladenosine synthase (442 aa).

The MTTase N-terminal domain occupies 2–120; it reads KKVFIRTFGC…LPKMIVDKET (119 aa). [4Fe-4S] cluster-binding residues include cysteine 11, cysteine 49, cysteine 83, cysteine 157, cysteine 161, and cysteine 164. The Radical SAM core domain maps to 143-375; that stretch reads RVEGGAAFVS…NEVIEAETAR (233 aa). One can recognise a TRAM domain in the interval 378 to 441; the sequence is QTMIGTVQRC…TFSLRGKIVE (64 aa).

The protein belongs to the methylthiotransferase family. MiaB subfamily. As to quaternary structure, monomer. Requires [4Fe-4S] cluster as cofactor.

It is found in the cytoplasm. It carries out the reaction N(6)-dimethylallyladenosine(37) in tRNA + (sulfur carrier)-SH + AH2 + 2 S-adenosyl-L-methionine = 2-methylsulfanyl-N(6)-dimethylallyladenosine(37) in tRNA + (sulfur carrier)-H + 5'-deoxyadenosine + L-methionine + A + S-adenosyl-L-homocysteine + 2 H(+). Its function is as follows. Catalyzes the methylthiolation of N6-(dimethylallyl)adenosine (i(6)A), leading to the formation of 2-methylthio-N6-(dimethylallyl)adenosine (ms(2)i(6)A) at position 37 in tRNAs that read codons beginning with uridine. This is tRNA-2-methylthio-N(6)-dimethylallyladenosine synthase from Neisseria gonorrhoeae (strain ATCC 700825 / FA 1090).